A 157-amino-acid polypeptide reads, in one-letter code: UPF0254 protein MTH_1148 (157 aa).

Belongs to the UPF0254 family.

In Methanothermobacter thermautotrophicus (strain ATCC 29096 / DSM 1053 / JCM 10044 / NBRC 100330 / Delta H) (Methanobacterium thermoautotrophicum), this protein is UPF0254 protein MTH_1148.